The sequence spans 100 residues: Small ribosomal subunit protein uS14c (100 aa).

This sequence belongs to the universal ribosomal protein uS14 family. In terms of assembly, part of the 30S ribosomal subunit.

The protein resides in the plastid. Its subcellular location is the chloroplast. Functionally, binds 16S rRNA, required for the assembly of 30S particles. The polypeptide is Small ribosomal subunit protein uS14c (Chlorokybus atmophyticus (Soil alga)).